Consider the following 180-residue polypeptide: Threonylcarbamoyl-AMP synthase (180 aa).

Residues methionine 1–proline 180 form the YrdC-like domain.

It belongs to the SUA5 family. TsaC subfamily.

It localises to the cytoplasm. The enzyme catalyses L-threonine + hydrogencarbonate + ATP = L-threonylcarbamoyladenylate + diphosphate + H2O. Functionally, required for the formation of a threonylcarbamoyl group on adenosine at position 37 (t(6)A37) in tRNAs that read codons beginning with adenine. Catalyzes the conversion of L-threonine, HCO(3)(-)/CO(2) and ATP to give threonylcarbamoyl-AMP (TC-AMP) as the acyladenylate intermediate, with the release of diphosphate. In Methylobacillus flagellatus (strain ATCC 51484 / DSM 6875 / VKM B-1610 / KT), this protein is Threonylcarbamoyl-AMP synthase.